The chain runs to 230 residues: Flagellar L-ring protein (230 aa).

The signal sequence occupies residues 1–22 (MSPLSNFARTALACAVAALLGG). The N-palmitoyl cysteine moiety is linked to residue C23. C23 carries S-diacylglycerol cysteine lipidation.

Belongs to the FlgH family. As to quaternary structure, the basal body constitutes a major portion of the flagellar organelle and consists of four rings (L,P,S, and M) mounted on a central rod.

Its subcellular location is the cell outer membrane. It localises to the bacterial flagellum basal body. Its function is as follows. Assembles around the rod to form the L-ring and probably protects the motor/basal body from shearing forces during rotation. The sequence is that of Flagellar L-ring protein from Stenotrophomonas maltophilia (strain R551-3).